The chain runs to 285 residues: Putative cytochrome c peroxidase, mitochondrial (285 aa).

H37 functions as the Proton acceptor in the catalytic mechanism. H161 is a binding site for heme b. Catalysis depends on W177, which acts as the Tryptophan radical intermediate.

The protein belongs to the peroxidase family. Cytochrome c peroxidase subfamily. In terms of assembly, forms a one-to-one complex with cytochrome c. The cofactor is heme b.

Its subcellular location is the mitochondrion matrix. It localises to the mitochondrion intermembrane space. It catalyses the reaction 2 Fe(II)-[cytochrome c] + H2O2 + 2 H(+) = 2 Fe(III)-[cytochrome c] + 2 H2O. In terms of biological role, destroys radicals which are normally produced within the cells and which are toxic to biological systems. This chain is Putative cytochrome c peroxidase, mitochondrial, found in Yarrowia lipolytica (strain CLIB 122 / E 150) (Yeast).